We begin with the raw amino-acid sequence, 157 residues long: Ribosome maturation factor RimP (157 aa).

The protein belongs to the RimP family.

The protein localises to the cytoplasm. Functionally, required for maturation of 30S ribosomal subunits. In Thermosynechococcus vestitus (strain NIES-2133 / IAM M-273 / BP-1), this protein is Ribosome maturation factor RimP.